Reading from the N-terminus, the 417-residue chain is Phosphoglycerate kinase 2 (417 aa).

The residue at position 2 (serine 2) is an N-acetylserine. Serine 2 and serine 4 each carry phosphoserine. Residue lysine 11 is modified to N6-acetyllysine. 6 residues coordinate (2R)-3-phosphoglycerate: valine 23, aspartate 24, phenylalanine 25, asparagine 26, glutamine 38, and arginine 39. Lysine 48 carries the post-translational modification N6-acetyllysine. Serine 62, histidine 63, glycine 65, and arginine 66 together coordinate (2R)-3-phosphoglycerate. N6-acetyllysine occurs at positions 75, 86, and 97. Positions 122 and 123 each coordinate (2R)-3-phosphoglycerate. Residues lysine 131 and lysine 146 each carry the N6-acetyllysine modification. (2R)-3-phosphoglycerate is bound by residues histidine 170 and arginine 171. Tyrosine 196 is modified (phosphotyrosine). Position 199 is an N6-acetyllysine (lysine 199). Glycine 214 is an ADP binding site. Glycine 214 lines the CDP pocket. AMP-binding residues include alanine 215 and lysine 216. An ATP-binding site is contributed by alanine 215. Residue alanine 215 coordinates Mg(2+). Alanine 218 and aspartate 219 together coordinate Mg(2+). Aspartate 219 serves as a coordination point for CDP. Lysine 220 contacts AMP. Lysine 220 is a binding site for ATP. Glycine 238 is a binding site for ADP. Glycine 238 is a CDP binding site. Glycine 239 serves as a coordination point for AMP. Residue glycine 239 coordinates ATP. Lysine 267 and lysine 291 each carry N6-acetyllysine. Glycine 313 serves as a coordination point for AMP. Glycine 313 provides a ligand contact to ATP. CDP contacts are provided by glycine 338, valine 340, and phenylalanine 343. Position 343 (phenylalanine 343) interacts with ADP. Residue glutamate 344 coordinates AMP. ATP-binding residues include glutamate 344, aspartate 375, and threonine 376. Aspartate 375 serves as a coordination point for Mg(2+).

This sequence belongs to the phosphoglycerate kinase family. As to quaternary structure, monomer. Requires Mg(2+) as cofactor.

It is found in the cytoplasm. The enzyme catalyses (2R)-3-phosphoglycerate + ATP = (2R)-3-phospho-glyceroyl phosphate + ADP. It functions in the pathway carbohydrate degradation; glycolysis; pyruvate from D-glyceraldehyde 3-phosphate: step 2/5. Essential for sperm motility and male fertility but is not required for the completion of spermatogenesis. This chain is Phosphoglycerate kinase 2 (PGK2), found in Equus caballus (Horse).